The primary structure comprises 525 residues: MAGRNIKNGENNKIAGSSLHLEKNPTTPPEAEATLKKLGLVASVAAGVQFGWALQLSLLTPYVQLLGIPHTWAAYIWLCGPISGMIVQPLVGYYSDRCTSRFGRRRPFIAAGAALVAVAVGLIGFAADIGAASGDPTGNVAKPRAIAVFVVGFWILDVANNTLQGPCRALLADMAAGSQTKTRYANAFFSFFMALGNIGGYAAGSYSRLYTVFPFTKTAACDVYCANLKSCFFISITLLIVLTILALSVVKERQITIDEIQEEEDLKNRNNSSGCARLPFFGQLIGALKDLPKPMLILLLVTALNWIAWFPFLLFDTDWMGKEVYGGTVGEGKLYDQGVHAGALGLMINSVVLGVMSLSIEGLARMVGGAKRLWGIVNIILAVCLAMTVLVTKSAEHFRDSHHIMGSAVPPPPPAGVKGGALAIFAVLGIPLAITFSIPFALASIFSASSGSGQGLSLGVLNLAIVVPQMFVSVTSGPWDAMFGGGNLPAFVVGAVAATASAVLSFTLLPSPPPEAKIGGSMGGH.

The Cytoplasmic segment spans residues 1–37 (MAGRNIKNGENNKIAGSSLHLEKNPTTPPEAEATLKK). The next 12 membrane-spanning stretches (helical) occupy residues 38-58 (LGLV…QLSL), 72-92 (WAAY…PLVG), 107-127 (PFIA…GFAA), 145-165 (AIAV…TLQG), 184-204 (YANA…YAAG), 230-250 (SCFF…LSVV), 295-315 (MLIL…FLLF), 338-358 (GVHA…VMSL), 373-393 (LWGI…LVTK), 422-442 (LAIF…PFAL), 455-475 (GLSL…VSVT), and 488-508 (LPAF…SFTL). At 509-525 (LPSPPPEAKIGGSMGGH) the chain is on the cytoplasmic side.

The protein belongs to the glycoside-pentoside-hexuronide (GPH) cation symporter transporter (TC 2.A.2.4) family.

Its subcellular location is the membrane. The protein operates within glycan biosynthesis; sucrose metabolism. In terms of biological role, responsible for the transport of sucrose into the cell, with the concomitant uptake of protons (symport system). Can also transport maltose at a lesser rate. In Spinacia oleracea (Spinach), this protein is Sucrose transport protein.